Here is a 153-residue protein sequence, read N- to C-terminus: ATP synthase subunit b' (153 aa).

A helical transmembrane segment spans residues 23-40 (LMAIQVVALTYILNSLFF).

This sequence belongs to the ATPase B chain family. In terms of assembly, F-type ATPases have 2 components, F(1) - the catalytic core - and F(0) - the membrane proton channel. F(1) has five subunits: alpha(3), beta(3), gamma(1), delta(1), epsilon(1). F(0) has four main subunits: a(1), b(1), b'(1) and c(10-14). The alpha and beta chains form an alternating ring which encloses part of the gamma chain. F(1) is attached to F(0) by a central stalk formed by the gamma and epsilon chains, while a peripheral stalk is formed by the delta, b and b' chains.

The protein resides in the cellular thylakoid membrane. Its function is as follows. F(1)F(0) ATP synthase produces ATP from ADP in the presence of a proton or sodium gradient. F-type ATPases consist of two structural domains, F(1) containing the extramembraneous catalytic core and F(0) containing the membrane proton channel, linked together by a central stalk and a peripheral stalk. During catalysis, ATP synthesis in the catalytic domain of F(1) is coupled via a rotary mechanism of the central stalk subunits to proton translocation. Functionally, component of the F(0) channel, it forms part of the peripheral stalk, linking F(1) to F(0). The b'-subunit is a diverged and duplicated form of b found in plants and photosynthetic bacteria. This Prochlorococcus marinus (strain MIT 9312) protein is ATP synthase subunit b'.